The primary structure comprises 339 residues: Glyceraldehyde-3-phosphate dehydrogenase (339 aa).

Residues 12–13, aspartate 35, and lysine 84 each bind NAD(+); that span reads RI. D-glyceraldehyde 3-phosphate-binding positions include 155–157, threonine 186, 215–216, and arginine 238; these read SCT and TG. Cysteine 156 serves as the catalytic Nucleophile. An NAD(+)-binding site is contributed by asparagine 320.

The protein belongs to the glyceraldehyde-3-phosphate dehydrogenase family. Homotetramer.

The protein resides in the cytoplasm. The catalysed reaction is D-glyceraldehyde 3-phosphate + phosphate + NAD(+) = (2R)-3-phospho-glyceroyl phosphate + NADH + H(+). It participates in carbohydrate degradation; glycolysis; pyruvate from D-glyceraldehyde 3-phosphate: step 1/5. The polypeptide is Glyceraldehyde-3-phosphate dehydrogenase (GAPD) (Mastigamoeba balamuthi (Phreatamoeba balamuthi)).